Consider the following 240-residue polypeptide: Eukaryotic translation initiation factor 4E-3 (240 aa).

Residues 1–51 (MVVTDSPVSGIMADQNIDPNTTTSPSPKEKHVSAIKAISGDEKAPSKEKKN) are disordered. Over residues 17 to 26 (IDPNTTTSPS) the composition is skewed to polar residues. Over residues 39-51 (SGDEKAPSKEKKN) the composition is skewed to basic and acidic residues. 2 EIF4G-binding regions span residues 65-68 (HCFQ) and 75-111 (FDNP…NNIH). Residues 83-88 (NQVIWG), K115, and 133-134 (WE) contribute to the mRNA site. A disulfide bridge links C138 with C176. The interval 159-168 (NTLLALVGEQ) is EIF4G-binding. Residues 183–188 (RARGDR) and 228–232 (KTLDR) contribute to the mRNA site.

The protein belongs to the eukaryotic initiation factor 4E family. EIF4F is a multi-subunit complex, the composition of which varies with external and internal environmental conditions. It is composed of at least EIF4A, EIF4E and EIF4G. EIF4E is also known to interact with other partners. In higher plants two isoforms of EIF4F have been identified, named isoform EIF4F and isoform EIF(iso)4F. Isoform EIF4F has subunits p220 and p26, whereas isoform EIF(iso)4F has subunits p82 and p28. Post-translationally, according to the redox status, the Cys-138-Cys-176 disulfide bridge may have a role in regulating protein function by affecting its ability to bind capped mRNA.

It is found in the nucleus. The protein localises to the cytoplasm. Component of the protein complex eIF4F, which is involved in the recognition of the mRNA cap, ATP-dependent unwinding of 5'-terminal secondary structure and recruitment of mRNA to the ribosome. Recognizes and binds the 7-methylguanosine-containing mRNA cap during an early step in the initiation of protein synthesis and facilitates ribosome binding by inducing the unwinding of the mRNAs secondary structures. In Arabidopsis thaliana (Mouse-ear cress), this protein is Eukaryotic translation initiation factor 4E-3.